The following is a 167-amino-acid chain: NAD(P)H-quinone oxidoreductase subunit I, chloroplastic (167 aa).

4Fe-4S ferredoxin-type domains follow at residues 55–84 (GRIH…VDWK) and 95–124 (LNYS…MTEE). 8 residues coordinate [4Fe-4S] cluster: cysteine 64, cysteine 67, cysteine 70, cysteine 74, cysteine 104, cysteine 107, cysteine 110, and cysteine 114.

It belongs to the complex I 23 kDa subunit family. NDH is composed of at least 16 different subunits, 5 of which are encoded in the nucleus. The cofactor is [4Fe-4S] cluster.

Its subcellular location is the plastid. It is found in the chloroplast thylakoid membrane. The catalysed reaction is a plastoquinone + NADH + (n+1) H(+)(in) = a plastoquinol + NAD(+) + n H(+)(out). It carries out the reaction a plastoquinone + NADPH + (n+1) H(+)(in) = a plastoquinol + NADP(+) + n H(+)(out). NDH shuttles electrons from NAD(P)H:plastoquinone, via FMN and iron-sulfur (Fe-S) centers, to quinones in the photosynthetic chain and possibly in a chloroplast respiratory chain. The immediate electron acceptor for the enzyme in this species is believed to be plastoquinone. Couples the redox reaction to proton translocation, and thus conserves the redox energy in a proton gradient. The polypeptide is NAD(P)H-quinone oxidoreductase subunit I, chloroplastic (Barbarea verna (Land cress)).